We begin with the raw amino-acid sequence, 234 residues long: Large ribosomal subunit protein uL1 (234 aa).

It belongs to the universal ribosomal protein uL1 family. Part of the 50S ribosomal subunit.

In terms of biological role, binds directly to 23S rRNA. The L1 stalk is quite mobile in the ribosome, and is involved in E site tRNA release. Functionally, protein L1 is also a translational repressor protein, it controls the translation of the L11 operon by binding to its mRNA. The chain is Large ribosomal subunit protein uL1 from Pectobacterium atrosepticum (strain SCRI 1043 / ATCC BAA-672) (Erwinia carotovora subsp. atroseptica).